The chain runs to 214 residues: Large ribosomal subunit protein uL16 (214 aa).

The protein belongs to the universal ribosomal protein uL16 family. In terms of assembly, component of the large ribosomal subunit. Mature ribosomes consist of a small (40S) and a large (60S) subunit. The 40S subunit contains about 33 different proteins and 1 molecule of RNA (18S). The 60S subunit contains about 49 different proteins and 3 molecules of RNA (28S, 5.8S and 5S).

The sequence is that of Large ribosomal subunit protein uL16 (rpl-10L) from Caenorhabditis elegans.